The sequence spans 579 residues: Copine-E (579 aa).

2 consecutive C2 domains span residues 45-175 (IDPS…KVIG) and 183-304 (QTGT…EFTL). Residues Asp-80, Asp-86, Asp-145, Asp-147, and Asp-153 each contribute to the Ca(2+) site. The region spanning 345–552 (NLMIAIDCTA…KKYENDPEQL (208 aa)) is the VWFA domain.

This sequence belongs to the copine family. Ca(2+) is required as a cofactor.

This Dictyostelium discoideum (Social amoeba) protein is Copine-E (cpnE).